The primary structure comprises 341 residues: Probable cytosolic iron-sulfur protein assembly protein Ciao1 (341 aa).

7 WD repeats span residues 12-51, 58-97, 102-141, 151-190, 197-236, 255-294, and 305-341; these read GHAGRVWSAAWHPGGKLFASCGEDKTIRVWNKSDTDRWVA, GHTRTIRELAWSCCGHYLASASFDTTVAVWDKKSGEFECN, GHDNEVKSVTWSRSGNLLATCSRDKSVWIWEIHHAPDQED, GHTQDVKKVCWHPQEDLLASASYDNTIRMYRQDLADSEWE, SHSSTVWSISFDATGQRLASCSEDTTVKVWQQYGPDNALG, YHSRSVYDIDWCKQTGLLATACGDDTVRIFREASDSDRNE, and AHSQDANKVAWHPTVPGLLLTASDDGEIKLWQYVDAD.

The protein belongs to the WD repeat CIA1 family.

Its function is as follows. Essential component of the cytosolic iron-sulfur (Fe/S) protein assembly machinery. Required for the maturation of extramitochondrial Fe/S proteins. The polypeptide is Probable cytosolic iron-sulfur protein assembly protein Ciao1 (Anopheles gambiae (African malaria mosquito)).